The sequence spans 159 residues: Ribosomal RNA large subunit methyltransferase H (159 aa).

Residues leucine 76, glycine 108, and 127–132 (FGLLTL) each bind S-adenosyl-L-methionine.

It belongs to the RNA methyltransferase RlmH family. As to quaternary structure, homodimer.

It is found in the cytoplasm. It carries out the reaction pseudouridine(1915) in 23S rRNA + S-adenosyl-L-methionine = N(3)-methylpseudouridine(1915) in 23S rRNA + S-adenosyl-L-homocysteine + H(+). Functionally, specifically methylates the pseudouridine at position 1915 (m3Psi1915) in 23S rRNA. The protein is Ribosomal RNA large subunit methyltransferase H of Leuconostoc mesenteroides subsp. mesenteroides (strain ATCC 8293 / DSM 20343 / BCRC 11652 / CCM 1803 / JCM 6124 / NCDO 523 / NBRC 100496 / NCIMB 8023 / NCTC 12954 / NRRL B-1118 / 37Y).